The sequence spans 835 residues: Microcephalin (835 aa).

The region spanning 1–93 is the BRCT 1 domain; sequence MAAPILKDVV…AHIDESLFPA (93 aa). Phosphoserine is present on residues Ser279, Ser287, Ser296, and Ser333. Disordered regions lie at residues 332–376 and 417–442; these read LSPT…RKRS and SPDN…PAQF. A Phosphothreonine modification is found at Thr335. Positions 343-361 are enriched in basic residues; it reads LLIHSRPRSSSVKRKRVSH. The residue at position 548 (Ser548) is a Phosphoserine. The disordered stretch occupies residues 555-583; that stretch reads AVDLKSTQNKGTTSKISNSSEGEAQSEHE. The span at 559–577 shows a compositional bias: polar residues; that stretch reads KSTQNKGTTSKISNSSEGE. BRCT domains are found at residues 640-730 and 751-833; these read SGRG…PFEL and YRGT…NYLL.

Interacts with CDC27 and maybe other components of the APC/C complex. Interacts with histone variant H2AX under DNA damage conditions.

It is found in the cytoplasm. Its subcellular location is the cytoskeleton. The protein resides in the microtubule organizing center. It localises to the centrosome. In terms of biological role, implicated in chromosome condensation and DNA damage induced cellular responses. May play a role in neurogenesis and regulation of the size of the cerebral cortex. The polypeptide is Microcephalin (Pan troglodytes (Chimpanzee)).